The sequence spans 241 residues: Probable transcriptional regulatory protein Rmet_0785 (241 aa).

It belongs to the TACO1 family.

The protein localises to the cytoplasm. The protein is Probable transcriptional regulatory protein Rmet_0785 of Cupriavidus metallidurans (strain ATCC 43123 / DSM 2839 / NBRC 102507 / CH34) (Ralstonia metallidurans).